We begin with the raw amino-acid sequence, 256 residues long: Adenylate kinase (256 aa).

Residue 49 to 54 (GAGKGT) coordinates ATP. The segment at 69 to 98 (ATGDMLRDQVEKKTPLGIAAKKIMDAGGLV) is NMP. Residues threonine 70, arginine 75, 96–98 (GLV), 125–128 (GFPR), and glutamine 132 each bind AMP. Residues 166–203 (GRLIHPASGRSYHKIFNPPKKAGIDDLTGEPLIQRSDD) are LID. Residues arginine 167 and 176-177 (SY) each bind ATP. Arginine 200 and arginine 211 together coordinate AMP. Glutamine 239 is a binding site for ATP.

It belongs to the adenylate kinase family. AK2 subfamily. As to quaternary structure, monomer.

Its subcellular location is the cytoplasm. The protein resides in the cytosol. The protein localises to the mitochondrion intermembrane space. The catalysed reaction is AMP + ATP = 2 ADP. Functionally, catalyzes the reversible transfer of the terminal phosphate group between ATP and AMP. Plays an important role in cellular energy homeostasis and in adenine nucleotide metabolism. Adenylate kinase activity is critical for regulation of the phosphate utilization and the AMP de novo biosynthesis pathways. The protein is Adenylate kinase of Coprinopsis cinerea (strain Okayama-7 / 130 / ATCC MYA-4618 / FGSC 9003) (Inky cap fungus).